Consider the following 66-residue polypeptide: MKAEDIRTKTQDQLTDDLASLKKEQFNLRFQKATGQLEKTARVRQVRKDIARIKTIAAEKSAAKKA.

The protein belongs to the universal ribosomal protein uL29 family.

In Mesorhizobium japonicum (strain LMG 29417 / CECT 9101 / MAFF 303099) (Mesorhizobium loti (strain MAFF 303099)), this protein is Large ribosomal subunit protein uL29.